The sequence spans 361 residues: Chorismate synthase (361 aa).

NADP(+)-binding residues include arginine 48 and arginine 54. Residues 131-133 (RSS), 243-244 (NA), glycine 287, 302-306 (KPTSS), and arginine 328 each bind FMN.

This sequence belongs to the chorismate synthase family. Homotetramer. FMNH2 is required as a cofactor.

The catalysed reaction is 5-O-(1-carboxyvinyl)-3-phosphoshikimate = chorismate + phosphate. Its pathway is metabolic intermediate biosynthesis; chorismate biosynthesis; chorismate from D-erythrose 4-phosphate and phosphoenolpyruvate: step 7/7. In terms of biological role, catalyzes the anti-1,4-elimination of the C-3 phosphate and the C-6 proR hydrogen from 5-enolpyruvylshikimate-3-phosphate (EPSP) to yield chorismate, which is the branch point compound that serves as the starting substrate for the three terminal pathways of aromatic amino acid biosynthesis. This reaction introduces a second double bond into the aromatic ring system. The polypeptide is Chorismate synthase (Bradyrhizobium sp. (strain BTAi1 / ATCC BAA-1182)).